We begin with the raw amino-acid sequence, 149 residues long: Nascent polypeptide-associated complex subunit beta-2 (149 aa).

The NAC-A/B domain maps to 38–103 (DKDNTKLQAE…PKENTLNGLY (66 aa)).

This sequence belongs to the NAC-beta family. Part of the nascent polypeptide-associated complex (NAC), consisting of EGD2 and either EGD1 or BTT1. NAC associates with ribosomes via EGD1 or BTT1.

It localises to the cytoplasm. The protein localises to the nucleus. In terms of biological role, acts as a component of the nascent polypeptide-associated complex (NAC), which promotes mitochondrial protein import by enhancing productive ribosome interactions with the outer mitochondrial membrane. Also blocks the inappropriate interaction of ribosomes translating non-secretory nascent polypeptides with translocation sites in the membrane of the endoplasmic reticulum. BTT1 may act as a transcription factor that exert a negative effect on the expression of several genes that are transcribed by RNA polymerase II. This Saccharomyces cerevisiae (strain ATCC 204508 / S288c) (Baker's yeast) protein is Nascent polypeptide-associated complex subunit beta-2 (BTT1).